Consider the following 683-residue polypeptide: Methionine--tRNA ligase (683 aa).

The short motif at Pro-14–His-24 is the 'HIGH' region element. Residues Cys-145, Cys-148, Cys-158, and Cys-161 each contribute to the Zn(2+) site. Positions Lys-331 to Ser-335 match the 'KMSKS' region motif. Lys-334 lines the ATP pocket. The segment at Ala-545–Pro-572 is disordered. In terms of domain architecture, tRNA-binding spans Thr-581–Lys-683.

The protein belongs to the class-I aminoacyl-tRNA synthetase family. MetG type 1 subfamily. Homodimer. Zn(2+) is required as a cofactor.

The protein localises to the cytoplasm. The catalysed reaction is tRNA(Met) + L-methionine + ATP = L-methionyl-tRNA(Met) + AMP + diphosphate. Its function is as follows. Is required not only for elongation of protein synthesis but also for the initiation of all mRNA translation through initiator tRNA(fMet) aminoacylation. The polypeptide is Methionine--tRNA ligase (Pseudomonas fluorescens (strain Pf0-1)).